The sequence spans 343 residues: Glucokinase (343 aa).

Gly-18–Thr-23 is a binding site for ATP.

It belongs to the bacterial glucokinase family.

It localises to the cytoplasm. The enzyme catalyses D-glucose + ATP = D-glucose 6-phosphate + ADP + H(+). This Brucella melitensis biotype 1 (strain ATCC 23456 / CCUG 17765 / NCTC 10094 / 16M) protein is Glucokinase.